The primary structure comprises 471 residues: Ribulose bisphosphate carboxylase large chain (471 aa).

K5 carries the post-translational modification N6,N6,N6-trimethyllysine. The substrate site is built by N114 and T164. The active-site Proton acceptor is the K166. K168 contributes to the substrate binding site. Residues K192, D194, and E195 each coordinate Mg(2+). K192 carries the N6-carboxylysine modification. Catalysis depends on H285, which acts as the Proton acceptor. The substrate site is built by R286, H318, and S370.

The protein belongs to the RuBisCO large chain family. Type I subfamily. As to quaternary structure, heterohexadecamer of 8 large chains and 8 small chains; disulfide-linked. The disulfide link is formed within the large subunit homodimers. It depends on Mg(2+) as a cofactor. Post-translationally, the disulfide bond which can form in the large chain dimeric partners within the hexadecamer appears to be associated with oxidative stress and protein turnover.

It is found in the plastid. The protein localises to the chloroplast. The enzyme catalyses 2 (2R)-3-phosphoglycerate + 2 H(+) = D-ribulose 1,5-bisphosphate + CO2 + H2O. It carries out the reaction D-ribulose 1,5-bisphosphate + O2 = 2-phosphoglycolate + (2R)-3-phosphoglycerate + 2 H(+). Functionally, ruBisCO catalyzes two reactions: the carboxylation of D-ribulose 1,5-bisphosphate, the primary event in carbon dioxide fixation, as well as the oxidative fragmentation of the pentose substrate in the photorespiration process. Both reactions occur simultaneously and in competition at the same active site. The polypeptide is Ribulose bisphosphate carboxylase large chain (Schlumbergera truncata (Thanksgiving cactus)).